A 283-amino-acid polypeptide reads, in one-letter code: ATP synthase gamma chain (283 aa).

It belongs to the ATPase gamma chain family. F-type ATPases have 2 components, CF(1) - the catalytic core - and CF(0) - the membrane proton channel. CF(1) has five subunits: alpha(3), beta(3), gamma(1), delta(1), epsilon(1). CF(0) has three main subunits: a, b and c.

It is found in the cell inner membrane. In terms of biological role, produces ATP from ADP in the presence of a proton gradient across the membrane. The gamma chain is believed to be important in regulating ATPase activity and the flow of protons through the CF(0) complex. The protein is ATP synthase gamma chain of Ehrlichia ruminantium (strain Gardel).